Consider the following 312-residue polypeptide: Acetyl-coenzyme A carboxylase carboxyl transferase subunit beta (312 aa).

Residues Leu24–Leu293 enclose the CoA carboxyltransferase N-terminal domain. The tract at residues His286–Ala312 is disordered. The segment covering Pro299–Ala312 has biased composition (low complexity).

It belongs to the AccD/PCCB family. As to quaternary structure, acetyl-CoA carboxylase is a heterohexamer composed of biotin carboxyl carrier protein (AccB), biotin carboxylase (AccC) and two subunits each of ACCase subunit alpha (AccA) and ACCase subunit beta (AccD).

It localises to the cytoplasm. The enzyme catalyses N(6)-carboxybiotinyl-L-lysyl-[protein] + acetyl-CoA = N(6)-biotinyl-L-lysyl-[protein] + malonyl-CoA. It participates in lipid metabolism; malonyl-CoA biosynthesis; malonyl-CoA from acetyl-CoA: step 1/1. In terms of biological role, component of the acetyl coenzyme A carboxylase (ACC) complex. Biotin carboxylase (BC) catalyzes the carboxylation of biotin on its carrier protein (BCCP) and then the CO(2) group is transferred by the transcarboxylase to acetyl-CoA to form malonyl-CoA. This Bradyrhizobium sp. (strain ORS 278) protein is Acetyl-coenzyme A carboxylase carboxyl transferase subunit beta.